The chain runs to 327 residues: CREB homolog crh-1 (327 aa).

A KID domain is found at 16–75 (SPLMMLLFKALQEGGDSEDEARRRREQLNRRPSYRMILKDLETADKVMKKEPEETPPSSV). Disordered stretches follow at residues 27–114 (QEGG…SPYG) and 151–200 (KVFP…VQSL). Over residues 35 to 44 (EARRRREQLN) the composition is skewed to basic and acidic residues. Ser48 carries the post-translational modification Phosphoserine. Residues 52–68 (ILKDLETADKVMKKEPE) show a composition bias toward basic and acidic residues. The span at 71 to 84 (PPSSVDASPLQFQS) shows a compositional bias: polar residues. Gly residues predominate over residues 161–172 (GLGGGGGGGGVP). Over residues 173-199 (GPSSGIAGMSVQPPTSSTPSQQQSVQS) the composition is skewed to low complexity. In terms of domain architecture, bZIP spans 266–317 (NRKRQVRLLKNREAAKECRRKKKEYVKCLENRVSVLENQNKALIEELKTLKE). Positions 267–292 (RKRQVRLLKNREAAKECRRKKKEYVK) are basic motif. Positions 284-318 (RRKKKEYVKCLENRVSVLENQNKALIEELKTLKEL) form a coiled coil. The tract at residues 294-315 (LENRVSVLENQNKALIEELKTL) is leucine-zipper.

Belongs to the bZIP family. In terms of assembly, interacts with CREB-regulated transcription coactivator homolog crtc-1. Post-translationally, transcriptional activity is enhanced by phosphorylation. Phosphorylated by cmk-1. In terms of tissue distribution, expressed widely, including in head neurons AFD, gustatory neurons ASE, the olfactory neurons AWC, and in the ASI sensory neurons, as well as in the intestine and gonads in hermaphrodites.

The protein resides in the nucleus. In terms of biological role, transcription factor. Transcriptional activity probably positively regulated by phosphorylation. Modulates expression of target genes, acting by binding to regulatory cAMP response elements (CRE). Acts downstream of the calcium-triggered CaMKK-CaMK1 signaling cascade, consisting of the protein kinase kinase ckk-1 and the protein kinase cmk-1. Plays a role in learning and memory, feeding behavior, stress response, entry into the dauer stage and modulation of lifespan. Involved in commitment to the developmentally arrested larval state known as dauer, acting by positively regulating the expression of dauer-inhibiting TGF-beta-like daf-7 in the ASI neurons. Plays a role in both associative and non-associative long-term memory (LTM). Involved in modulating feeding behavior, acting by regulating transcription of tryptophan hydroxylase tph-1 in serotonergic ADF neurons. Regulates transcription of genes involved in endoplasmic reticulum (ER) stress. Involved in modulation of lifespan, in response to raised temperature, but independently of the heat-shock response pathway, acting by regulating transcription of FMRFamide-like neuropeptides flp-6 in the AFD neuron. Plays a role in associative long-term memory (LTM) and learning. Its function is as follows. Plays a role in associative long-term memory (LTM) and learning; perhaps required at the time of acquisition and/or the consolidation phase of memory formation. This chain is CREB homolog crh-1, found in Caenorhabditis elegans.